Here is a 203-residue protein sequence, read N- to C-terminus: Small ribosomal subunit protein uS4 (203 aa).

The region spanning 93 to 154 is the S4 RNA-binding domain; it reads RRLDNVVYRC…KSRNLDAVAD (62 aa).

The protein belongs to the universal ribosomal protein uS4 family. Part of the 30S ribosomal subunit. Contacts protein S5. The interaction surface between S4 and S5 is involved in control of translational fidelity.

One of the primary rRNA binding proteins, it binds directly to 16S rRNA where it nucleates assembly of the body of the 30S subunit. Its function is as follows. With S5 and S12 plays an important role in translational accuracy. This Chlorobaculum tepidum (strain ATCC 49652 / DSM 12025 / NBRC 103806 / TLS) (Chlorobium tepidum) protein is Small ribosomal subunit protein uS4.